The sequence spans 719 residues: MKSKNQNMYRSFSSNATVDKSFTDPLEHNTNMELQNSNHEDCLKMSEYESVEPFVSVSTIQTGIGIAGKILGNLGVPFAGQVASLYSFILGELWPKGKSQWEIFMEHVEELINQKISTYARNKALADLKGLGDALAVYHESLESWIENRNNTRVRSVVKNQYIALELMFVQKLPSFAVSGEEVPLLPIYAQAANLHLLLLRDASIFGKEWGLSESEISTFYNRQSSQTQEYSDYCSEWYNTGLNRLRGTNAESWVRYNQFRRDMTLMVLDLVALFPSYDTRMYPIPTSAQLTREVYTDAIGTVHPNASFASTTWYNNNAPSFSTIEAAVVRNPHLLDFLEQVTIYSLLSRWSNTQYMNMWGGHKLEFRTIGGTLNTSTQGSTNTSINPVTLPFTSRDVYRTESLAGLNLFLTQPVNGVPRVDFHWKFVTHPIASDNFYYPGYAGIGTQLQDSENELPPETTGQPNYESYSHRLSHIGLISASHVKALVYSWTHRSADRTNTINSDSITQIPLVKAFNLPSGASVVRGPGFTGGDILQRTNTGTFGDIRVNINPPFAQRYRLRIRYASTTNLEFHTSINGKAINQGNFSATMNRGEDLDYKAFRTVGFTTPFSFSNAQSTFTIGAWNFSLGNEVYIDRIEFVPVEVTYEAEYDLKKAQDEITAMFTSTNLRRLKTNVTDCHIDQVSNLVESLSDEFYLDEKRELFEIVKYAKQLNIERNM.

This sequence belongs to the delta endotoxin family.

Functionally, promotes colloidosmotic lysis by binding to the midgut epithelial cells of many lepidopteran larvae. Active on Plutella xylostella and on Bombyx mori. This is Pesticidal crystal protein Cry1Id (cry1Id) from Bacillus thuringiensis.